A 145-amino-acid polypeptide reads, in one-letter code: Major pollen allergen Lig v 1 (145 aa).

3 disulfides stabilise this stretch: Cys-19-Cys-90, Cys-22-Cys-131, and Cys-43-Cys-78. Residue Asn-111 is glycosylated (N-linked (GlcNAc...) asparagine).

The protein belongs to the Ole e I family.

The protein localises to the secreted. This is Major pollen allergen Lig v 1 from Ligustrum vulgare (Common privet).